The following is a 593-amino-acid chain: Cyclin-dependent kinase-like 3 (593 aa).

Residues 4–286 (YETLGKVGEG…STDLLHHDYF (283 aa)) enclose the Protein kinase domain. ATP contacts are provided by residues 10–18 (VGEGSYGTV) and lysine 33. Residues 45-51 (KIATREI) carry the [NKR]KIAxRE motif. The Proton acceptor role is filled by aspartate 125. The residue at position 158 (threonine 158) is a Phosphothreonine. The residue at position 160 (tyrosine 160) is a Phosphotyrosine. Over residues 368–403 (GKGDVPDLKKTESEGEHRQQGTAEDTHPTSLDRKPS) the composition is skewed to basic and acidic residues. The tract at residues 368-512 (GKGDVPDLKK…NDQIASGNKR (145 aa)) is disordered. Low complexity predominate over residues 436–452 (NLTSSNLLAANPSSNLS). Composition is skewed to polar residues over residues 468–491 (SSQT…QVQT) and 499–508 (RTGQNDQIAS).

This sequence belongs to the protein kinase superfamily. CMGC Ser/Thr protein kinase family. CDC2/CDKX subfamily. In terms of tissue distribution, highly expressed in brain, and to a lower extent in heart and testis.

It localises to the nucleus. The protein resides in the cytoplasm. The enzyme catalyses L-seryl-[protein] + ATP = O-phospho-L-seryl-[protein] + ADP + H(+). It carries out the reaction L-threonyl-[protein] + ATP = O-phospho-L-threonyl-[protein] + ADP + H(+). This chain is Cyclin-dependent kinase-like 3, found in Rattus norvegicus (Rat).